The primary structure comprises 1764 residues: Latent-transforming growth factor beta-binding protein 2 (1764 aa).

The N-terminal stretch at 1–35 is a signal peptide; it reads MRAPTTVRCSGRIQRARWRGFLPLVLALLMGTSHA. The disordered stretch occupies residues 80-140; the sequence is PGLSPSEWNQ…PPAARTAHSV (61 aa). Residues 94–115 are heparin-binding; that stretch reads IPGRLAEAEARRPSRAQQLRRV. Residues 108-128 are compositionally biased toward polar residues; the sequence is RAQQLRRVQSPVQTRRSNPRG. Asn-175 is a glycosylation site (N-linked (GlcNAc...) asparagine). Positions 181 to 213 constitute an EGF-like 1 domain; that stretch reads IKPVCQPPCQNRGSCSRPQLCICRSGFRGARCE. Cystine bridges form between Cys-185-Cys-195, Cys-189-Cys-201, and Cys-203-Cys-212. A disordered region spans residues 220 to 279; it reads EFDPQNARPVPRRSVEGAPGPHRSSEARGSLVTRIQPLLPPLPPPPSRTLSQTRPLQQHA. The interval 226–243 is heparin-binding; sequence ARPVPRRSVEGAPGPHRS. Residues 257 to 266 are compositionally biased toward pro residues; it reads LLPPLPPPPS. Asn-330 is a glycosylation site (N-linked (GlcNAc...) asparagine). 331–341 serves as a coordination point for heparin; that stretch reads LTEKIKKIKVV. One can recognise an EGF-like 2 domain in the interval 383 to 415; the sequence is RIYFCQIPCLNGGRCIGRDECWCPANSTGKFCH. 3 disulfide bridges follow: Cys-387-Cys-397, Cys-391-Cys-403, and Cys-405-Cys-414. A glycan (N-linked (GlcNAc...) asparagine) is linked at Asn-408. The disordered stretch occupies residues 484–529; that stretch reads EVDPVPEDNSVETRASHRPHGSSGHSHWASNSIPARAGEAPRPPPV. Ser-493 carries the post-translational modification Phosphoserine. One can recognise a TB 1 domain in the interval 538–590; that stretch reads GQCYLSTVNGQCANPLGELTSQEDCCGSVGTSWGVTSCAPCPPRPAFPVIENG. 3 cysteine pairs are disulfide-bonded: Cys-540-Cys-562, Cys-549-Cys-575, and Cys-563-Cys-578. An N-linked (GlcNAc...) asparagine glycan is attached at Asn-602. The region spanning 608–648 is the EGF-like 3; calcium-binding domain; the sequence is DINECLTLGLCKDSECVNTRGSYLCTCRPGLMLDPSRSRCV. 7 cysteine pairs are disulfide-bonded: Cys-612-Cys-623, Cys-618-Cys-632, Cys-634-Cys-647, Cys-660-Cys-682, Cys-669-Cys-695, Cys-683-Cys-698, and Cys-684-Cys-710. Positions 658-710 constitute a TB 2 domain; sequence GLCYRSMVSGTCTLPLVQRITKQICCCSRVGKAWGSKCEHCPLPGTEAFREIC. Disordered stretches follow at residues 729 to 759 and 786 to 809; these read KAEE…RQPL and SAPH…LPGQ. The 43-residue stretch at 834 to 876 folds into the EGF-like 4 domain; the sequence is GFDPCFAGASNICGPGTCVKLPNGYRCVCSPGYQLHPSQDYCT. Cystine bridges form between Cys-838-Cys-851, Cys-846-Cys-860, Cys-862-Cys-875, Cys-881-Cys-892, Cys-886-Cys-901, Cys-903-Cys-918, Cys-924-Cys-935, Cys-930-Cys-944, Cys-946-Cys-958, Cys-964-Cys-975, Cys-970-Cys-984, Cys-987-Cys-998, Cys-1004-Cys-1015, Cys-1010-Cys-1024, Cys-1026-Cys-1039, Cys-1045-Cys-1056, Cys-1051-Cys-1065, Cys-1068-Cys-1081, Cys-1087-Cys-1098, Cys-1093-Cys-1107, Cys-1110-Cys-1123, Cys-1129-Cys-1141, Cys-1136-Cys-1150, Cys-1152-Cys-1164, Cys-1170-Cys-1182, Cys-1176-Cys-1191, Cys-1193-Cys-1206, Cys-1212-Cys-1223, Cys-1218-Cys-1232, Cys-1234-Cys-1247, Cys-1253-Cys-1265, Cys-1259-Cys-1274, Cys-1276-Cys-1289, Cys-1295-Cys-1307, Cys-1302-Cys-1316, Cys-1318-Cys-1332, Cys-1359-Cys-1382, Cys-1369-Cys-1394, Cys-1383-Cys-1397, Cys-1435-Cys-1448, Cys-1443-Cys-1457, Cys-1459-Cys-1472, Cys-1478-Cys-1488, Cys-1483-Cys-1497, and Cys-1499-Cys-1512. Positions 877 to 919 constitute an EGF-like 5; calcium-binding domain; the sequence is DDNECLRNPCEGRGRCVNSVGSYSCLCYPGYTLATLGDTQECQ. Positions 920 to 959 constitute an EGF-like 6; calcium-binding domain; sequence DVDECEQPGVCSGGRCSNTEGSYHCECDQGYVMVRRGHCQ. One can recognise an EGF-like 7; calcium-binding domain in the interval 960 to 999; sequence DINECRHPGTCPDGRCVNSPGSYTCLACEEGYIGQSGNCV. Positions 1000-1040 constitute an EGF-like 8; calcium-binding domain; it reads DMNECLTPGICAHGRCINMEGSFRCSCEPGYELTPDKKGCR. Residues 1041-1082 form the EGF-like 9; calcium-binding domain; sequence DVDECASRASCPTGLCLNTEGSFTCSACQSGYWVNEDGTACE. The EGF-like 10; calcium-binding domain maps to 1083-1124; it reads DLDECAFPGVCPTGVCTNTVGSFSCKDCDRGFRPSPLGNSCE. In terms of domain architecture, EGF-like 11; calcium-binding spans 1125-1165; that stretch reads DVDECEGPQNSCLGGECKNTDGSYQCLCPQGFQLANGTVCE. A glycan (N-linked (GlcNAc...) asparagine) is linked at Asn-1160. An EGF-like 12; calcium-binding domain is found at 1166-1207; sequence DVDECVGEEHCAPHGECLNSPGSFFCLCAPGFASAEGGTRCQ. The region spanning 1208-1248 is the EGF-like 13; calcium-binding domain; it reads DVDECATTEPCLGGHCVNTEGSFNCLCETGFQPAPDSGECV. An EGF-like 15; calcium-binding domain is found at 1249-1290; it reads DIDECANDTVCGNHGFCDNTDGSFRCLCDQGFETSPSGWECV. Residue Asn-1255 is glycosylated (N-linked (GlcNAc...) asparagine). In terms of domain architecture, EGF-like 16; calcium-binding spans 1291–1333; that stretch reads DVNECELMLAVCGDALCENVEGSFLCLCASDLEEYDAEEGHCR. The 53-residue stretch at 1357 to 1409 folds into the TB 3 domain; it reads MECYAEHNGGPPCSQILGQNSTQAECCSTQGARWGETCDPCPSEDSVEFSELC. Asn-1376 carries an N-linked (GlcNAc...) asparagine glycan. In terms of domain architecture, EGF-like 17; calcium-binding spans 1431–1473; that stretch reads DADECILFGPALCQNGRCLNTVPGYICLCNPGYHYDAVSRKCQ. The 40-residue stretch at 1474–1513 folds into the EGF-like 18; calcium-binding domain; the sequence is DHNECQDLACENGECVNTEGSFHCFCSPPLILDLSGQRCV. The N-linked (GlcNAc...) asparagine glycan is linked to Asn-1514. In terms of domain architecture, TB 4 spans 1530–1582; that stretch reads DICWKKVTNDVCSQPLRGHHTTYTECCCQDGEAWSQQCALCPPRSSEVYAQLC. 10 disulfides stabilise this stretch: Cys-1532–Cys-1555, Cys-1541–Cys-1567, Cys-1556–Cys-1570, Cys-1557–Cys-1582, Cys-1680–Cys-1691, Cys-1686–Cys-1700, Cys-1702–Cys-1715, Cys-1721–Cys-1736, Cys-1731–Cys-1745, and Cys-1747–Cys-1760. Positions 1585–1764 are C-terminal domain; that stretch reads ARIEAEREAG…PGPPHCAAKE (180 aa). Residues 1676–1716 form the EGF-like 19; calcium-binding domain; it reads QAEECGILNGCENGRCVRVREGYTCDCFEGFQLDTALMACV. One can recognise an EGF-like 20; calcium-binding domain in the interval 1717 to 1761; the sequence is DVNECEDLNGAARLCAHGHCENTEGSYRCHCSPGYVAEPGPPHCA.

It belongs to the LTBP family. Forms part of the large latent transforming growth factor beta precursor complex; removal is essential for activation of complex. Interacts with SDC4. Interacts (via C-terminal domain) with FBN1 (via N-terminal domain) in a Ca(+2)-dependent manner. Post-translationally, N-Glycosylated. In terms of processing, contains hydroxylated asparagine residues. As to expression, expressed in cortical astrocytes and glioma cells. Expression is up-regulated by TGFB1.

It is found in the secreted. It localises to the extracellular space. The protein resides in the extracellular matrix. Functionally, may play an integral structural role in elastic-fiber architectural organization and/or assembly. In Rattus norvegicus (Rat), this protein is Latent-transforming growth factor beta-binding protein 2 (Ltbp2).